The following is a 253-amino-acid chain: Imidazole glycerol phosphate synthase subunit HisF (253 aa).

Residues aspartate 11 and aspartate 130 contribute to the active site.

Belongs to the HisA/HisF family. As to quaternary structure, heterodimer of HisH and HisF.

It is found in the cytoplasm. The enzyme catalyses 5-[(5-phospho-1-deoxy-D-ribulos-1-ylimino)methylamino]-1-(5-phospho-beta-D-ribosyl)imidazole-4-carboxamide + L-glutamine = D-erythro-1-(imidazol-4-yl)glycerol 3-phosphate + 5-amino-1-(5-phospho-beta-D-ribosyl)imidazole-4-carboxamide + L-glutamate + H(+). It functions in the pathway amino-acid biosynthesis; L-histidine biosynthesis; L-histidine from 5-phospho-alpha-D-ribose 1-diphosphate: step 5/9. Its function is as follows. IGPS catalyzes the conversion of PRFAR and glutamine to IGP, AICAR and glutamate. The HisF subunit catalyzes the cyclization activity that produces IGP and AICAR from PRFAR using the ammonia provided by the HisH subunit. The protein is Imidazole glycerol phosphate synthase subunit HisF of Acidobacterium capsulatum (strain ATCC 51196 / DSM 11244 / BCRC 80197 / JCM 7670 / NBRC 15755 / NCIMB 13165 / 161).